Consider the following 124-residue polypeptide: Magnetosome protein MamC (124 aa).

The Cytoplasmic segment spans residues 2-8; that stretch reads PFHLAPY. A helical transmembrane segment spans residues 9 to 29; sequence LAKSVPGVGVLGALVGGAAAL. At 30-64 the chain is on the lumenal side; it reads AKNVRLLKEKRITNTEAAIDTGKETVGAGLATALS. The MIC, when fused with the C-terminus of maltose-binding protein (MBP) or expressed as a fragment, improves quality of iron particles during precipitation experiments, binds magnetite stretch occupies residues 36–56; sequence LKEKRITNTEAAIDTGKETVG. Residues 65 to 85 form a helical membrane-spanning segment; that stretch reads AVAATAVGGGLVVSLGTALVA. Residues 86-124 are Cytoplasmic-facing; that stretch reads GVAAKYAWDRGVDLVEKELNRGKAANGASDEDILRDELA.

The protein belongs to the magnetosome MamC family. In terms of assembly, probably interacts with MamA.

The protein localises to the magnetosome membrane. Probably involved in magnetite crystal growth. The lumenal domain may bind the magnetite crystals, affecting crystal size and shape. This Paramagnetospirillum magneticum (strain ATCC 700264 / AMB-1) (Magnetospirillum magneticum) protein is Magnetosome protein MamC.